A 328-amino-acid chain; its full sequence is Ornithine carbamoyltransferase, catabolic (328 aa).

Carbamoyl phosphate-binding positions include 56-59 (STRT), Gln-83, Arg-107, and 134-137 (HPTQ). L-ornithine-binding positions include Asn-166, Asp-230, and 234-235 (SM). Carbamoyl phosphate contacts are provided by residues 270–271 (CL) and Arg-315.

Belongs to the aspartate/ornithine carbamoyltransferase superfamily. OTCase family.

The protein resides in the cytoplasm. The enzyme catalyses carbamoyl phosphate + L-ornithine = L-citrulline + phosphate + H(+). It participates in amino-acid degradation; L-arginine degradation via ADI pathway; carbamoyl phosphate from L-arginine: step 2/2. In terms of biological role, reversibly catalyzes the transfer of the carbamoyl group from carbamoyl phosphate (CP) to the N(epsilon) atom of ornithine (ORN) to produce L-citrulline. The polypeptide is Ornithine carbamoyltransferase, catabolic (arcB) (Borreliella afzelii (Borrelia afzelii)).